A 473-amino-acid polypeptide reads, in one-letter code: Purple acid phosphatase 1 (473 aa).

The first 38 residues, 1-38 (MRLVVVGLWCLILGLILNPTKFCDAGVTSSYVRKSLSA), serve as a signal peptide directing secretion. A glycan (N-linked (GlcNAc...) asparagine) is linked at Asn-118. Fe cation is bound at residue Asp-172. N-linked (GlcNAc...) asparagine glycosylation occurs at Asn-180. 2 residues coordinate Fe cation: Asp-201 and Tyr-204. A Mn(2+)-binding site is contributed by Asp-201. Asn-238 serves as a coordination point for Mn(2+). Position 238 (Asn-238) interacts with substrate. An N-linked (GlcNAc...) asparagine glycan is attached at Asn-311. His-323 is a Mn(2+) binding site. His-333 acts as the Proton donor in catalysis. A Mn(2+)-binding site is contributed by His-360. 360 to 362 (HVH) provides a ligand contact to substrate. A Fe cation-binding site is contributed by His-362. Asn-433 is a glycosylation site (N-linked (GlcNAc...) asparagine).

Belongs to the metallophosphoesterase superfamily. Purple acid phosphatase family. Homodimer; disulfide-linked. Requires Fe cation as cofactor. It depends on Mn(2+) as a cofactor. Zn(2+) is required as a cofactor. The cofactor is Cu(2+). Mg(2+) serves as cofactor.

It localises to the secreted. It catalyses the reaction a phosphate monoester + H2O = an alcohol + phosphate. The chain is Purple acid phosphatase 1 (PAP1) from Ipomoea batatas (Sweet potato).